The chain runs to 695 residues: Threonine--tRNA ligase (695 aa).

Positions 1–76 (MPRIPSPPQA…TTTDVVEPVT (76 aa)) constitute a TGS domain. Residues 279-585 (DHRKLGVELD…LLEHHAGAFP (307 aa)) form a catalytic region. Residues Cys384, His435, and His562 each contribute to the Zn(2+) site.

The protein belongs to the class-II aminoacyl-tRNA synthetase family. Homodimer. Zn(2+) is required as a cofactor.

The protein localises to the cytoplasm. The catalysed reaction is tRNA(Thr) + L-threonine + ATP = L-threonyl-tRNA(Thr) + AMP + diphosphate + H(+). Catalyzes the attachment of threonine to tRNA(Thr) in a two-step reaction: L-threonine is first activated by ATP to form Thr-AMP and then transferred to the acceptor end of tRNA(Thr). Also edits incorrectly charged L-seryl-tRNA(Thr). The polypeptide is Threonine--tRNA ligase (Leifsonia xyli subsp. xyli (strain CTCB07)).